A 325-amino-acid polypeptide reads, in one-letter code: Glutarate 2-hydroxylase (325 aa).

H160, D162, and H292 together coordinate Fe cation.

Belongs to the glutarate hydroxylase family. As to quaternary structure, homotetramer. The cofactor is Fe(2+).

It carries out the reaction glutarate + 2-oxoglutarate + O2 = (S)-2-hydroxyglutarate + succinate + CO2. It functions in the pathway amino-acid degradation. Acts as an alpha-ketoglutarate-dependent dioxygenase catalyzing hydroxylation of glutarate (GA) to L-2-hydroxyglutarate (L2HG). Functions in a L-lysine degradation pathway that proceeds via cadaverine, glutarate and L-2-hydroxyglutarate. The polypeptide is Glutarate 2-hydroxylase (Pseudomonas putida (strain ATCC 700007 / DSM 6899 / JCM 31910 / BCRC 17059 / LMG 24140 / F1)).